Here is a 334-residue protein sequence, read N- to C-terminus: Mediator of RNA polymerase II transcription subunit 4 (334 aa).

Residues 71–100 (QEREQLIRTLEAHVEKRDEVIQQLETNLKS) adopt a coiled-coil conformation. The interval 193–334 (PLITSPSASS…ASKKTGSSNK (142 aa)) is disordered. Polar residues-rich tracts occupy residues 194–206 (LITSPSASSSNGG) and 251–282 (NEKQWQNPGVSGATSTQSPYNRVSQSPSSSPN).

Belongs to the Mediator complex subunit 4 family. As to quaternary structure, component of the Mediator complex.

It is found in the nucleus. Functionally, component of the Mediator complex, a coactivator involved in the regulated transcription of nearly all RNA polymerase II-dependent genes. Mediator functions as a bridge to convey information from gene-specific regulatory proteins to the basal RNA polymerase II transcription machinery. Mediator is recruited to promoters by direct interactions with regulatory proteins and serves as a scaffold for the assembly of a functional preinitiation complex with RNA polymerase II and the general transcription factors. The protein is Mediator of RNA polymerase II transcription subunit 4 (mdt-4) of Caenorhabditis elegans.